The primary structure comprises 274 residues: Acetyl-coenzyme A carboxylase carboxyl transferase subunit alpha (274 aa).

One can recognise a CoA carboxyltransferase C-terminal domain in the interval N2–E250.

The protein belongs to the AccA family. In terms of assembly, acetyl-CoA carboxylase is a heterohexamer composed of biotin carboxyl carrier protein (AccB), biotin carboxylase (AccC) and two subunits each of ACCase subunit alpha (AccA) and ACCase subunit beta (AccD).

The protein resides in the cytoplasm. It catalyses the reaction N(6)-carboxybiotinyl-L-lysyl-[protein] + acetyl-CoA = N(6)-biotinyl-L-lysyl-[protein] + malonyl-CoA. The protein operates within lipid metabolism; malonyl-CoA biosynthesis; malonyl-CoA from acetyl-CoA: step 1/1. In terms of biological role, component of the acetyl coenzyme A carboxylase (ACC) complex. First, biotin carboxylase catalyzes the carboxylation of biotin on its carrier protein (BCCP) and then the CO(2) group is transferred by the carboxyltransferase to acetyl-CoA to form malonyl-CoA. The sequence is that of Acetyl-coenzyme A carboxylase carboxyl transferase subunit alpha from Clostridium botulinum (strain Eklund 17B / Type B).